Consider the following 98-residue polypeptide: Acylphosphatase-1 (98 aa).

An Acylphosphatase-like domain is found at 8 to 98 (SVDYEVFGKV…LEHSTFSICK (91 aa)). Active-site residues include R23 and N41.

The protein belongs to the acylphosphatase family.

It carries out the reaction an acyl phosphate + H2O = a carboxylate + phosphate + H(+). The protein is Acylphosphatase-1 (acyp1) of Xenopus tropicalis (Western clawed frog).